A 420-amino-acid chain; its full sequence is Glucose-1-phosphate adenylyltransferase (420 aa).

Alpha-D-glucose 1-phosphate-binding positions include Tyr-107, Gly-173, 188 to 189 (EK), and Ser-206.

It belongs to the bacterial/plant glucose-1-phosphate adenylyltransferase family. In terms of assembly, homotetramer.

The enzyme catalyses alpha-D-glucose 1-phosphate + ATP + H(+) = ADP-alpha-D-glucose + diphosphate. It participates in glycan biosynthesis; glycogen biosynthesis. Involved in the biosynthesis of ADP-glucose, a building block required for the elongation reactions to produce glycogen. Catalyzes the reaction between ATP and alpha-D-glucose 1-phosphate (G1P) to produce pyrophosphate and ADP-Glc. In Shewanella frigidimarina (strain NCIMB 400), this protein is Glucose-1-phosphate adenylyltransferase.